The primary structure comprises 361 residues: Very-long-chain 3-oxoacyl-CoA reductase (361 aa).

A helical membrane pass occupies residues 32-52; sequence PALILSTVGAAFLLRYTLSIF. Residues valine 79, aspartate 133, asparagine 163, arginine 198, tyrosine 236, lysine 240, valine 269, and serine 271 each coordinate NADP(+). Tyrosine 236 acts as the Proton donor in catalysis. Lysine 240 (lowers pKa of active site Tyr) is an active-site residue.

This sequence belongs to the short-chain dehydrogenases/reductases (SDR) family.

It localises to the endoplasmic reticulum membrane. The enzyme catalyses a very-long-chain (3R)-3-hydroxyacyl-CoA + NADP(+) = a very-long-chain 3-oxoacyl-CoA + NADPH + H(+). It participates in lipid metabolism; fatty acid biosynthesis. Functionally, component of the microsomal membrane bound fatty acid elongation system, which produces the 26-carbon very long-chain fatty acids (VLCFA) from palmitate. Catalyzes the reduction of the 3-ketoacyl-CoA intermediate that is formed in each cycle of fatty acid elongation. VLCFAs serve as precursors for ceramide and sphingolipids. The sequence is that of Very-long-chain 3-oxoacyl-CoA reductase from Cryptococcus neoformans var. neoformans serotype D (strain B-3501A) (Filobasidiella neoformans).